A 376-amino-acid chain; its full sequence is Probable low-specificity L-threonine aldolase (376 aa).

Over residues 1 to 21 the composition is skewed to polar residues; sequence MSGSVTSTTTETRLCPSNQGS. The interval 1–22 is disordered; sequence MSGSVTSTTTETRLCPSNQGSA. Lys226 is subject to N6-(pyridoxal phosphate)lysine.

Belongs to the threonine aldolase family. As to quaternary structure, homotetramer. Requires pyridoxal 5'-phosphate as cofactor.

It carries out the reaction L-threonine = acetaldehyde + glycine. The enzyme catalyses L-allo-threonine = acetaldehyde + glycine. It participates in amino-acid degradation; L-threonine degradation via aldolase pathway; acetaldehyde and glycine from L-threonine: step 1/1. This Schizosaccharomyces pombe (strain 972 / ATCC 24843) (Fission yeast) protein is Probable low-specificity L-threonine aldolase (gly1).